We begin with the raw amino-acid sequence, 193 residues long: Oligoribonuclease (193 aa).

Residues 8–171 (LVWLDLEMTG…EDIRESVAEL (164 aa)) form the Exonuclease domain. The active site involves tyrosine 129.

The protein belongs to the oligoribonuclease family.

It is found in the cytoplasm. In terms of biological role, 3'-to-5' exoribonuclease specific for small oligoribonucleotides. The chain is Oligoribonuclease from Alkalilimnicola ehrlichii (strain ATCC BAA-1101 / DSM 17681 / MLHE-1).